The following is a 314-amino-acid chain: Ribosomal protein uL3 glutamine methyltransferase (314 aa).

Belongs to the protein N5-glutamine methyltransferase family. PrmB subfamily.

It carries out the reaction L-glutaminyl-[ribosomal protein uL3] + S-adenosyl-L-methionine = N(5)-methyl-L-glutaminyl-[ribosomal protein uL3] + S-adenosyl-L-homocysteine + H(+). Functionally, methylates large ribosomal subunit protein uL3 on a specific glutamine residue. The polypeptide is Ribosomal protein uL3 glutamine methyltransferase (Shewanella oneidensis (strain ATCC 700550 / JCM 31522 / CIP 106686 / LMG 19005 / NCIMB 14063 / MR-1)).